A 316-amino-acid chain; its full sequence is Nucleotide-binding protein NFA_35930 (316 aa).

Residue 32 to 39 participates in ATP binding; the sequence is GLSGAGRG. 83–86 contributes to the GTP binding site; that stretch reads DVRS.

This sequence belongs to the RapZ-like family.

In terms of biological role, displays ATPase and GTPase activities. This is Nucleotide-binding protein NFA_35930 from Nocardia farcinica (strain IFM 10152).